Reading from the N-terminus, the 581-residue chain is Putative phospholipase B-like 3 (581 aa).

The first 16 residues, 1–16 (MKLLFFLFGLIFAVEQ), serve as a signal peptide directing secretion. N-linked (GlcNAc...) asparagine glycans are attached at residues Asn50, Asn82, Asn132, Asn169, Asn215, Asn309, Asn543, Asn546, and Asn560.

Belongs to the phospholipase B-like family.

It is found in the secreted. Its function is as follows. Putative phospholipase. This is Putative phospholipase B-like 3 from Caenorhabditis elegans.